We begin with the raw amino-acid sequence, 445 residues long: N-succinylarginine dihydrolase (445 aa).

Substrate-binding positions include 19–28 (AGLSFGNVAS), N110, and 137–138 (HR). Residue E174 is part of the active site. Position 214 (R214) interacts with substrate. H250 is an active-site residue. The substrate site is built by D252 and N363. C369 (nucleophile) is an active-site residue.

It belongs to the succinylarginine dihydrolase family. Homodimer.

It carries out the reaction N(2)-succinyl-L-arginine + 2 H2O + 2 H(+) = N(2)-succinyl-L-ornithine + 2 NH4(+) + CO2. Its pathway is amino-acid degradation; L-arginine degradation via AST pathway; L-glutamate and succinate from L-arginine: step 2/5. Catalyzes the hydrolysis of N(2)-succinylarginine into N(2)-succinylornithine, ammonia and CO(2). This chain is N-succinylarginine dihydrolase, found in Shewanella woodyi (strain ATCC 51908 / MS32).